The following is a 409-amino-acid chain: Arginine deiminase (409 aa).

Residue Cys399 is the Amidino-cysteine intermediate of the active site.

It belongs to the arginine deiminase family.

The protein localises to the cytoplasm. The enzyme catalyses L-arginine + H2O = L-citrulline + NH4(+). It participates in amino-acid degradation; L-arginine degradation via ADI pathway; carbamoyl phosphate from L-arginine: step 1/2. The chain is Arginine deiminase from Borrelia recurrentis (strain A1).